The following is a 341-amino-acid chain: tRNA N6-adenosine threonylcarbamoyltransferase (341 aa).

Fe cation is bound by residues H111 and H115. Substrate contacts are provided by residues 133–137 (AVSGG), D166, G179, D183, and N273. D301 contributes to the Fe cation binding site.

It belongs to the KAE1 / TsaD family. The cofactor is Fe(2+).

The protein resides in the cytoplasm. The enzyme catalyses L-threonylcarbamoyladenylate + adenosine(37) in tRNA = N(6)-L-threonylcarbamoyladenosine(37) in tRNA + AMP + H(+). Functionally, required for the formation of a threonylcarbamoyl group on adenosine at position 37 (t(6)A37) in tRNAs that read codons beginning with adenine. Is involved in the transfer of the threonylcarbamoyl moiety of threonylcarbamoyl-AMP (TC-AMP) to the N6 group of A37, together with TsaE and TsaB. TsaD likely plays a direct catalytic role in this reaction. This is tRNA N6-adenosine threonylcarbamoyltransferase from Geobacter metallireducens (strain ATCC 53774 / DSM 7210 / GS-15).